We begin with the raw amino-acid sequence, 80 residues long: UPF0270 protein VFMJ11_0205 (80 aa).

This sequence belongs to the UPF0270 family.

This chain is UPF0270 protein VFMJ11_0205, found in Aliivibrio fischeri (strain MJ11) (Vibrio fischeri).